The sequence spans 121 residues: 18 kDa learning-associated protein of slug (121 aa).

Disordered stretches follow at residues 44 to 67 (TMKT…GSME) and 95 to 121 (AVKK…AIKW). Polar residues predominate over residues 45–64 (MKTTEPIQENKTSEGTSTDG).

It belongs to the learning-associated protein family. Expressed predominantly in cerebral ganglia (at protein level). The mRNA is highly expressed in cerebral ganglia, and is detected at lower levels in visceral-pedal ganglia, head, and body, but is not detected in the tail.

Its subcellular location is the cytoplasm. The protein resides in the secreted. Its function is as follows. May be involved in modulating long-term memory formation and retention, at least with respect to odor-taste associative learning. The chain is 18 kDa learning-associated protein of slug from Lehmannia marginata (Tree slug).